A 286-amino-acid chain; its full sequence is Shikimate dehydrogenase (NADP(+)) (286 aa).

Shikimate contacts are provided by residues 20–22 and Ser-67; that span reads SLS. The active-site Proton acceptor is Lys-71. 2 residues coordinate shikimate: Asn-92 and Asp-107. NADP(+)-binding positions include 131–135 and Ala-230; that span reads GGGGA. Residue Tyr-232 participates in shikimate binding. Residue Gly-253 participates in NADP(+) binding.

Belongs to the shikimate dehydrogenase family. Homodimer.

The enzyme catalyses shikimate + NADP(+) = 3-dehydroshikimate + NADPH + H(+). Its pathway is metabolic intermediate biosynthesis; chorismate biosynthesis; chorismate from D-erythrose 4-phosphate and phosphoenolpyruvate: step 4/7. Involved in the biosynthesis of the chorismate, which leads to the biosynthesis of aromatic amino acids. Catalyzes the reversible NADPH linked reduction of 3-dehydroshikimate (DHSA) to yield shikimate (SA). This is Shikimate dehydrogenase (NADP(+)) from Lactococcus lactis subsp. cremoris (strain SK11).